The following is a 404-amino-acid chain: Homoserine O-succinyltransferase (404 aa).

Positions 1 to 25 (MTDIQADPAVTAADAAQADTSSPTA) are enriched in low complexity. A disordered region spans residues 1-30 (MTDIQADPAVTAADAAQADTSSPTAHQGKP). In terms of domain architecture, AB hydrolase-1 spans 75-384 (NAVLICHALN…HGHDAFLLED (310 aa)). Ser-179 functions as the Nucleophile in the catalytic mechanism. Arg-249 serves as a coordination point for substrate. Active-site residues include Asp-344 and His-377. Asp-378 is a substrate binding site.

Belongs to the AB hydrolase superfamily. MetX family. Homodimer.

The protein localises to the cytoplasm. The catalysed reaction is L-homoserine + succinyl-CoA = O-succinyl-L-homoserine + CoA. The protein operates within amino-acid biosynthesis; L-methionine biosynthesis via de novo pathway; O-succinyl-L-homoserine from L-homoserine: step 1/1. Its function is as follows. Transfers a succinyl group from succinyl-CoA to L-homoserine, forming succinyl-L-homoserine. This Ralstonia pickettii (strain 12J) protein is Homoserine O-succinyltransferase.